The sequence spans 179 residues: Large ribosomal subunit protein uL5 (179 aa).

The protein belongs to the universal ribosomal protein uL5 family. In terms of assembly, part of the 50S ribosomal subunit; part of the 5S rRNA/L5/L18/L25 subcomplex. Contacts the 5S rRNA and the P site tRNA. Forms a bridge to the 30S subunit in the 70S ribosome.

This is one of the proteins that bind and probably mediate the attachment of the 5S RNA into the large ribosomal subunit, where it forms part of the central protuberance. In the 70S ribosome it contacts protein S13 of the 30S subunit (bridge B1b), connecting the 2 subunits; this bridge is implicated in subunit movement. Contacts the P site tRNA; the 5S rRNA and some of its associated proteins might help stabilize positioning of ribosome-bound tRNAs. The chain is Large ribosomal subunit protein uL5 from Shouchella clausii (strain KSM-K16) (Alkalihalobacillus clausii).